The chain runs to 322 residues: Glycerol-3-phosphate dehydrogenase [NAD(P)+] (322 aa).

Trp13, His33, and Lys99 together coordinate NADPH. Residues Lys99, Gly127, and Ser129 each contribute to the sn-glycerol 3-phosphate site. Ala131 contributes to the NADPH binding site. Residues Lys182, Asp235, Ser245, Arg246, and Asn247 each contribute to the sn-glycerol 3-phosphate site. The Proton acceptor role is filled by Lys182. An NADPH-binding site is contributed by Arg246. Glu272 is an NADPH binding site.

The protein belongs to the NAD-dependent glycerol-3-phosphate dehydrogenase family.

It localises to the cytoplasm. The enzyme catalyses sn-glycerol 3-phosphate + NAD(+) = dihydroxyacetone phosphate + NADH + H(+). It catalyses the reaction sn-glycerol 3-phosphate + NADP(+) = dihydroxyacetone phosphate + NADPH + H(+). It participates in membrane lipid metabolism; glycerophospholipid metabolism. Its function is as follows. Catalyzes the reduction of the glycolytic intermediate dihydroxyacetone phosphate (DHAP) to sn-glycerol 3-phosphate (G3P), the key precursor for phospholipid synthesis. This Ruthia magnifica subsp. Calyptogena magnifica protein is Glycerol-3-phosphate dehydrogenase [NAD(P)+].